The following is a 984-amino-acid chain: Glutamate [NMDA] receptor subunit 1 (984 aa).

Positions 1 to 24 (MAAAFAYRWLLCAAGIVNVLPIGA) are cleaved as a signal peptide. Topologically, residues 25-570 (QRHTASDNPS…TLVSFLQPFS (546 aa)) are extracellular. N-linked (GlcNAc...) asparagine glycans are attached at residues Asn255, Asn311, Asn342, Asn394, Asn451, Asn478, and Asn498. Glycine-binding positions include 527–529 (PLT) and Arg534. A helical membrane pass occupies residues 571 to 591 (NTLWILVMVSVHVVALVLYLL). The Cytoplasmic segment spans residues 592–648 (DRFSPFGRFKLSHSDSNEEKALNLSSAVWFAWGVLLNSGIGEGTPRSFSARVLGMVW). Residues 649-669 (AGFAMIIVASYTANLAAFLVL) traverse the membrane as a helical segment. The Extracellular segment spans residues 670–828 (ERPKTKLSGI…KTPNTLGLKN (159 aa)). A glycan (N-linked (GlcNAc...) asparagine) is linked at Asn690. Residues Ser700 and Asp744 each coordinate glycine. Residues 829–849 (MAGVFILVGVGIAGGVGLIII) form a helical membrane-spanning segment. Over 850–984 (EVIYKKHQVK…YTSDVSHLVV (135 aa)) the chain is Cytoplasmic. A disordered region spans residues 947 to 984 (KSGLVPPALGLGKTRPQQNPLPPRYSPGYTSDVSHLVV). Over residues 974–984 (GYTSDVSHLVV) the composition is skewed to polar residues.

It belongs to the glutamate-gated ion channel (TC 1.A.10.1) family. Forms a heteromeric NMDA channel with Nmdar2.

It localises to the cell membrane. The protein localises to the postsynaptic cell membrane. Its subcellular location is the postsynaptic density. NMDA receptor subtype of glutamate-gated ion channels with high calcium permeability and voltage-dependent sensitivity to magnesium. Mediated by glycine. This protein plays a key role in synaptic plasticity, synaptogenesis, excitotoxicity, memory acquisition and learning. It mediates neuronal functions in glutamate neurotransmission. Is involved in the cell surface targeting of NMDA receptors. Plays a role in associative learning and in long-term memory consolidation. The polypeptide is Glutamate [NMDA] receptor subunit 1 (Drosophila virilis (Fruit fly)).